The following is a 513-amino-acid chain: uncharacterized protein (513 aa).

The 59-residue stretch at 3 to 61 (NLKIGQKLQLEIERMGINGEGIGVISGRLVFIPYALPGEEVLVEITENARNFSRAKLVK) folds into the TRAM domain. Residues Q309, Y338, D359, and D407 each contribute to the S-adenosyl-L-methionine site. The active-site Nucleophile is C434.

Belongs to the class I-like SAM-binding methyltransferase superfamily. RNA M5U methyltransferase family.

This is an uncharacterized protein from Lactococcus lactis subsp. lactis (strain IL1403) (Streptococcus lactis).